The following is a 469-amino-acid chain: Calcium-binding mitochondrial carrier protein SCaMC-2-B (469 aa).

At 1-189 (MLCLCLYVPV…EKNTGMWWRH (189 aa)) the chain is on the mitochondrial intermembrane side. 3 EF-hand domains span residues 47–80 (SYRKWRKKVVKAGDKDLDGQLDFEEFVHYLRDHE), 78–113 (DHEKKLRLVFKSLDKKNDGHIDSQEIMQSLRDLGVH), and 114–149 (ISEEQAEKILKSMDKNGTMTIDWNEWRDYHLLHPAE). Residues aspartate 60, aspartate 62, aspartate 64, glutamine 66, and glutamate 71 each contribute to the Ca(2+) site. 3 Solcar repeats span residues 184–270 (GMWW…IKRL), 278–363 (LGIL…LKNS), and 375–463 (PGVF…LKIT). The helical transmembrane segment at 190 to 207 (LVAGGGAGAVSRTCTAPL) threads the bilayer. Residues 208-244 (DRLKVLMQVHATRSNSMGIAGGFTQMIREGGLRSLWR) are Mitochondrial matrix-facing. The helical transmembrane segment at 245–264 (GNGINVLKIAPESAIKFMAY) threads the bilayer. At 265-287 (EQIKRLIGSNQETLGILERLVSG) the chain is on the mitochondrial intermembrane side. Residues 288 to 301 (SLAGAIAQSSIYPM) traverse the membrane as a helical segment. The Mitochondrial matrix segment spans residues 302-337 (EVLKTRLALGRTGQYSGIADCAKHIFKKEGMTAFYK). Residues 338-357 (GYIPNMLGIIPYAGIDLAVY) traverse the membrane as a helical segment. Residues 358–380 (ETLKNSWLQRFATDSADPGVFVL) are Mitochondrial intermembrane-facing. Residues 381 to 398 (LACGTMSSTCGQLASYPL) form a helical membrane-spanning segment. The Mitochondrial matrix portion of the chain corresponds to 399-437 (ALVRTRMQAQASQEGSPQMTMSGLFRHIVRTEGAIGLYR). Residues 438 to 457 (GLAPNFMKVIPAVSISYVVY) traverse the membrane as a helical segment. Over 458 to 469 (ENLKITLGVQSR) the chain is Mitochondrial intermembrane.

The protein belongs to the mitochondrial carrier (TC 2.A.29) family.

The protein resides in the mitochondrion inner membrane. Its function is as follows. Calcium-dependent mitochondrial solute carrier. This chain is Calcium-binding mitochondrial carrier protein SCaMC-2-B (slc25a25b), found in Danio rerio (Zebrafish).